Consider the following 116-residue polypeptide: Iron-sulfur cluster insertion protein ErpA (116 aa).

Residues Cys-44, Cys-108, and Cys-110 each contribute to the iron-sulfur cluster site.

The protein belongs to the HesB/IscA family. In terms of assembly, homodimer. The cofactor is iron-sulfur cluster.

Required for insertion of 4Fe-4S clusters for at least IspG. The protein is Iron-sulfur cluster insertion protein ErpA of Shewanella amazonensis (strain ATCC BAA-1098 / SB2B).